We begin with the raw amino-acid sequence, 478 residues long: Ankyrin repeat and BTB/POZ domain-containing protein 1 (478 aa).

ANK repeat units follow at residues 1 to 31 (MDTS…EVNV) and 35 to 64 (WDST…RCEA). 2 consecutive BTB domains span residues 115-182 (SDVV…DIGV) and 272-346 (PDIC…ELSP). Residues 451–477 (VQTYSAIEEAQQRLRALEDLLVSIGLD) adopt a coiled-coil conformation.

As to expression, ubiquitously expressed in all fetal tissues examined including heart, brain, liver, and kidney. Also expressed at lower levels in both adult heart and hypertrophic heart.

It is found in the cytoplasm. May act as a mediator of the PTEN growth-suppressive signaling pathway. May play a role in developmental processes. The polypeptide is Ankyrin repeat and BTB/POZ domain-containing protein 1 (Homo sapiens (Human)).